We begin with the raw amino-acid sequence, 160 residues long: Dysbindin domain-containing protein 1 (160 aa).

Disordered stretches follow at residues 1–34 (MESP…GDTC) and 95–160 (ADSD…PKED). Residues Ser-3, Ser-97, and Ser-121 each carry the phosphoserine modification. Residues 127–143 (TRAEQNREKQTPSDPER) are compositionally biased toward basic and acidic residues.

This sequence belongs to the dysbindin family.

This is Dysbindin domain-containing protein 1 (Dbndd1) from Rattus norvegicus (Rat).